We begin with the raw amino-acid sequence, 231 residues long: Small ribosomal subunit protein uS3 (231 aa).

Positions 39 to 107 (VREFLKEKLK…PAQINIAEVR (69 aa)) constitute a KH type-2 domain.

The protein belongs to the universal ribosomal protein uS3 family. In terms of assembly, part of the 30S ribosomal subunit. Forms a tight complex with proteins S10 and S14.

Its function is as follows. Binds the lower part of the 30S subunit head. Binds mRNA in the 70S ribosome, positioning it for translation. This chain is Small ribosomal subunit protein uS3, found in Colwellia psychrerythraea (strain 34H / ATCC BAA-681) (Vibrio psychroerythus).